Consider the following 130-residue polypeptide: Flagellar assembly factor FliW (130 aa).

It belongs to the FliW family. Interacts with translational regulator CsrA and flagellin(s).

Its subcellular location is the cytoplasm. Functionally, acts as an anti-CsrA protein, binds CsrA and prevents it from repressing translation of its target genes, one of which is flagellin. Binds to flagellin and participates in the assembly of the flagellum. The chain is Flagellar assembly factor FliW from Borrelia turicatae (strain 91E135).